Here is a 347-residue protein sequence, read N- to C-terminus: MDNKLGLEIIEVVEQAAIAAARWMGKGDNKTADQVAVEAMREKLNQIPMRGRIVIGEGTRDEAPMLYIGEEVGICTRPDAEQFCRVEELVEIDIAVDPCEGTNLVAKGQNGSMAVLAISEKGGLLHAPDIYMQKLAAPPQAKGKVHLDYPPEKNLQIIAESLDREVSDLTVVVMDRKRHVDLIRQIREAGARVKLITDGDISAALSAGFNGTGIHALMGIGAAPEGVISAAALRCLGAHFQGRLIYDPEVVQAGTYLPPVEETRRQLKEQGIEDPDKVWECEELASGKEVLFAATGITDGDLMRGVRFFGGGARTETLVISSQSRTVRFVDTIHMKDGQQPRSLQLR.

4 residues coordinate Mn(2+): D33, E57, D97, and E100. Substrate-binding positions include 100–102, Y131, 176–178, and 198–200; these read EGT, RKR, and DGD. A Mn(2+)-binding site is contributed by E225.

Belongs to the FBPase class 2 family. Homotetramer. Mn(2+) serves as cofactor.

The catalysed reaction is beta-D-fructose 1,6-bisphosphate + H2O = beta-D-fructose 6-phosphate + phosphate. It carries out the reaction D-sedoheptulose 1,7-bisphosphate + H2O = D-sedoheptulose 7-phosphate + phosphate. It participates in carbohydrate biosynthesis; Calvin cycle. Catalyzes the hydrolysis of fructose 1,6-bisphosphate (Fru 1,6-P2) and sedoheptulose 1,7-bisphosphate (Sed 1,7-P2) to fructose 6-phosphate and sedoheptulose 7-phosphate, respectively. This Synechococcus sp. (strain JA-3-3Ab) (Cyanobacteria bacterium Yellowstone A-Prime) protein is D-fructose 1,6-bisphosphatase class 2/sedoheptulose 1,7-bisphosphatase.